An 81-amino-acid chain; its full sequence is Cytotoxin 3a (81 aa).

The N-terminal stretch at 1-21 is a signal peptide; the sequence is MKTLLLTLVVVTIVCLDLGYT. Disulfide bonds link cysteine 24–cysteine 42, cysteine 35–cysteine 59, cysteine 63–cysteine 74, and cysteine 75–cysteine 80.

The protein belongs to the three-finger toxin family. Short-chain subfamily. Type IA cytotoxin sub-subfamily. Monomer in solution; Homodimer and oligomer in the presence of negatively charged lipids forming a pore with a size ranging between 20 and 30 Angstroms. In terms of tissue distribution, expressed by the venom gland.

Its subcellular location is the secreted. It localises to the target cell membrane. Functionally, shows cytolytic activity on many different cells by forming pore in lipid membranes. In vivo, increases heart rate or kills the animal by cardiac arrest. In addition, it binds to heparin with high affinity, interacts with Kv channel-interacting protein 1 (KCNIP1) in a calcium-independent manner, and binds to integrin alpha-V/beta-3 (ITGAV/ITGB3) with moderate affinity. This Naja atra (Chinese cobra) protein is Cytotoxin 3a.